A 458-amino-acid chain; its full sequence is tRNA modification GTPase MnmE (458 aa).

The (6S)-5-formyl-5,6,7,8-tetrahydrofolate site is built by Arg26, Glu88, and Arg127. The 155-residue stretch at 224 to 378 (GLSTAIIGRP…IEDRINQLFF (155 aa)) folds into the TrmE-type G domain. K(+) is bound at residue Asn234. GTP contacts are provided by residues 234–239 (NVGKSS), 253–259 (TDIAGTT), and 278–281 (DTAG). A Mg(2+)-binding site is contributed by Ser238. Residues Thr253, Ile255, and Thr258 each contribute to the K(+) site. Residue Thr259 participates in Mg(2+) binding. Lys458 provides a ligand contact to (6S)-5-formyl-5,6,7,8-tetrahydrofolate.

It belongs to the TRAFAC class TrmE-Era-EngA-EngB-Septin-like GTPase superfamily. TrmE GTPase family. As to quaternary structure, homodimer. Heterotetramer of two MnmE and two MnmG subunits. Requires K(+) as cofactor.

It is found in the cytoplasm. Functionally, exhibits a very high intrinsic GTPase hydrolysis rate. Involved in the addition of a carboxymethylaminomethyl (cmnm) group at the wobble position (U34) of certain tRNAs, forming tRNA-cmnm(5)s(2)U34. The protein is tRNA modification GTPase MnmE of Streptococcus pyogenes serotype M12 (strain MGAS9429).